Consider the following 215-residue polypeptide: MOB kinase activator-like 1A (215 aa).

A disordered region spans residues 1–27 (MSLFGLGRNQKTFRPKKSAPSGSKGAQ). C79, C84, H161, and H166 together coordinate Zn(2+).

Belongs to the MOB1/phocein family. In terms of assembly, interacts with SIK1 at the plasma membrane and in the nucleus. In terms of tissue distribution, constitutively expressed. In 3- to 4-day-old seedlings, expression is high in the shoot apical meristem and along the vasculature in cotyledons, hypocotyls and roots. At the root tip, expression is detected in columella and lateral root cap cells as well as in the stem cell niche around the quiescent center (QC). The levels of expression decrease progressively in the meristematic zone from the root tip towards the base of the root, becoming stronger again in the elongation zone. In flowers, expression appears localized in ovules and pollen.

It localises to the nucleus. Its subcellular location is the cell membrane. It is found in the vacuole membrane. Plays a key role in regulation of cell expansion and cell division. Required for proper plant development, the correct patterning of the root meristem and the control of root growth. Involved in both sporogenesis and gametogenesis. The protein is MOB kinase activator-like 1A of Arabidopsis thaliana (Mouse-ear cress).